Consider the following 401-residue polypeptide: Tyrosine--tRNA ligase (401 aa).

The 'HIGH' region motif lies at 45 to 54; that stretch reads PTAPDLHLGH. A 'KMSKS' region motif is present at residues 230-234; sequence KMSKS. Lys233 contributes to the ATP binding site. The S4 RNA-binding domain occupies 339–399; it reads IWLAKALVEC…GKRKFAKLKV (61 aa).

The protein belongs to the class-I aminoacyl-tRNA synthetase family. TyrS type 2 subfamily. As to quaternary structure, homodimer.

Its subcellular location is the cytoplasm. It carries out the reaction tRNA(Tyr) + L-tyrosine + ATP = L-tyrosyl-tRNA(Tyr) + AMP + diphosphate + H(+). Catalyzes the attachment of tyrosine to tRNA(Tyr) in a two-step reaction: tyrosine is first activated by ATP to form Tyr-AMP and then transferred to the acceptor end of tRNA(Tyr). This is Tyrosine--tRNA ligase from Campylobacter jejuni (strain RM1221).